A 490-amino-acid chain; its full sequence is Lignostilbene-alpha,beta-dioxygenase isozyme III (490 aa).

H167, H218, H285, and H477 together coordinate Fe cation.

The protein belongs to the carotenoid oxygenase family. As to quaternary structure, homodimer of two beta subunits. Fe(2+) is required as a cofactor.

It catalyses the reaction 1,2-bis(4-hydroxy-3-methoxyphenyl)ethylene + O2 = 2 vanillin. With respect to regulation, activity is high with beta-5 type stilbene and minimal with beta-1 type stilbene. A 4-hydroxyl group and trans-stilbene structure is essential for the binding of substrates to the enzyme. Catalyzes the cleavage of the interphenyl double bond (C alpha-C beta) of lignin-derived polyphenolic diaryl-propane type compounds (Stilbene). This chain is Lignostilbene-alpha,beta-dioxygenase isozyme III, found in Sphingomonas paucimobilis (Pseudomonas paucimobilis).